A 901-amino-acid polypeptide reads, in one-letter code: Aconitate hydratase A (901 aa).

Positions 443, 509, and 512 each coordinate [4Fe-4S] cluster.

The protein belongs to the aconitase/IPM isomerase family. In terms of assembly, monomer. It depends on [4Fe-4S] cluster as a cofactor.

It carries out the reaction citrate = D-threo-isocitrate. It catalyses the reaction (2S,3R)-3-hydroxybutane-1,2,3-tricarboxylate = 2-methyl-cis-aconitate + H2O. It participates in carbohydrate metabolism; tricarboxylic acid cycle; isocitrate from oxaloacetate: step 2/2. It functions in the pathway organic acid metabolism; propanoate degradation. In terms of biological role, involved in the catabolism of short chain fatty acids (SCFA) via the tricarboxylic acid (TCA)(acetyl degradation route) and probably the 2-methylcitrate cycle I (propionate degradation route). Catalyzes the reversible isomerization of citrate to isocitrate via cis-aconitate. Could catalyze the hydration of 2-methyl-cis-aconitate to yield (2R,3S)-2-methylisocitrate. The apo form of AcnA functions as a RNA-binding regulatory protein. The polypeptide is Aconitate hydratase A (acnA) (Staphylococcus epidermidis (strain ATCC 35984 / DSM 28319 / BCRC 17069 / CCUG 31568 / BM 3577 / RP62A)).